Consider the following 309-residue polypeptide: Protein phosphatase 1 regulatory subunit 42 (309 aa).

LRR repeat units follow at residues 29–50, 51–72, 73–94, 95–116, 117–138, 147–168, and 169–190; these read KITH…SLCK, NLSV…NYAT, NLTH…RSLK, KLEK…EGLG, ELRE…LFDP, SLCI…ELLE, and NLNQ…EFLL. The region spanning 204–242 is the LRRCT domain; that stretch reads NPVCLKPKYRDRLILVSKSLEFLDGKEIKNIERQFLMNW.

Interacts with PPP1CC isoform gamma-2; the interaction is direct. Interacts with actin, dynein, KIF5B, KIFC1 and tubulin. Associates with microtubules. Post-translationally, phosphorylated; in the testis.

The protein localises to the cytoplasm. It is found in the cytoskeleton. Its subcellular location is the microtubule organizing center. It localises to the centrosome. In terms of biological role, regulates phosphatase activity of protein phosphatase 1 (PP1) complexes in the testis. The polypeptide is Protein phosphatase 1 regulatory subunit 42 (Homo sapiens (Human)).